Consider the following 107-residue polypeptide: Large ribosomal subunit protein bL21c (107 aa).

It belongs to the bacterial ribosomal protein bL21 family. As to quaternary structure, part of the 50S ribosomal subunit.

It localises to the plastid. Its subcellular location is the chloroplast. In terms of biological role, this protein binds to 23S rRNA. In Cyanidioschyzon merolae (strain NIES-3377 / 10D) (Unicellular red alga), this protein is Large ribosomal subunit protein bL21c.